The sequence spans 179 residues: ATP synthase subunit b (179 aa).

A helical transmembrane segment spans residues F26–P46.

Belongs to the ATPase B chain family. As to quaternary structure, F-type ATPases have 2 components, F(1) - the catalytic core - and F(0) - the membrane proton channel. F(1) has five subunits: alpha(3), beta(3), gamma(1), delta(1), epsilon(1). F(0) has four main subunits: a(1), b(1), b'(1) and c(10-14). The alpha and beta chains form an alternating ring which encloses part of the gamma chain. F(1) is attached to F(0) by a central stalk formed by the gamma and epsilon chains, while a peripheral stalk is formed by the delta, b and b' chains.

Its subcellular location is the cellular thylakoid membrane. In terms of biological role, f(1)F(0) ATP synthase produces ATP from ADP in the presence of a proton or sodium gradient. F-type ATPases consist of two structural domains, F(1) containing the extramembraneous catalytic core and F(0) containing the membrane proton channel, linked together by a central stalk and a peripheral stalk. During catalysis, ATP synthesis in the catalytic domain of F(1) is coupled via a rotary mechanism of the central stalk subunits to proton translocation. Functionally, component of the F(0) channel, it forms part of the peripheral stalk, linking F(1) to F(0). The protein is ATP synthase subunit b of Synechocystis sp. (strain ATCC 27184 / PCC 6803 / Kazusa).